We begin with the raw amino-acid sequence, 361 residues long: tRNA/tmRNA (uracil-C(5))-methyltransferase (361 aa).

Positions 185, 213, 218, 234, and 294 each coordinate S-adenosyl-L-methionine. Catalysis depends on Cys319, which acts as the Nucleophile. Catalysis depends on Glu353, which acts as the Proton acceptor.

It belongs to the class I-like SAM-binding methyltransferase superfamily. RNA M5U methyltransferase family. TrmA subfamily.

It carries out the reaction uridine(54) in tRNA + S-adenosyl-L-methionine = 5-methyluridine(54) in tRNA + S-adenosyl-L-homocysteine + H(+). It catalyses the reaction uridine(341) in tmRNA + S-adenosyl-L-methionine = 5-methyluridine(341) in tmRNA + S-adenosyl-L-homocysteine + H(+). In terms of biological role, dual-specificity methyltransferase that catalyzes the formation of 5-methyluridine at position 54 (m5U54) in all tRNAs, and that of position 341 (m5U341) in tmRNA (transfer-mRNA). In Azotobacter vinelandii (strain DJ / ATCC BAA-1303), this protein is tRNA/tmRNA (uracil-C(5))-methyltransferase.